We begin with the raw amino-acid sequence, 696 residues long: Elongation factor G (696 aa).

A tr-type G domain is found at 8–286 (EDVRNIGIAA…AVVHYLPSPV (279 aa)). Residues 17–24 (AHIDAGKT), 81–85 (DTPGH), and 135–138 (NKMD) each bind GTP.

This sequence belongs to the TRAFAC class translation factor GTPase superfamily. Classic translation factor GTPase family. EF-G/EF-2 subfamily.

Its subcellular location is the cytoplasm. Catalyzes the GTP-dependent ribosomal translocation step during translation elongation. During this step, the ribosome changes from the pre-translocational (PRE) to the post-translocational (POST) state as the newly formed A-site-bound peptidyl-tRNA and P-site-bound deacylated tRNA move to the P and E sites, respectively. Catalyzes the coordinated movement of the two tRNA molecules, the mRNA and conformational changes in the ribosome. This is Elongation factor G from Sulfurovum sp. (strain NBC37-1).